The sequence spans 274 residues: tRNA pseudouridine synthase A (274 aa).

Catalysis depends on Asp-60, which acts as the Nucleophile. Substrate is bound at residue Tyr-118.

Belongs to the tRNA pseudouridine synthase TruA family. Homodimer.

The catalysed reaction is uridine(38/39/40) in tRNA = pseudouridine(38/39/40) in tRNA. In terms of biological role, formation of pseudouridine at positions 38, 39 and 40 in the anticodon stem and loop of transfer RNAs. This is tRNA pseudouridine synthase A from Picosynechococcus sp. (strain ATCC 27264 / PCC 7002 / PR-6) (Agmenellum quadruplicatum).